A 93-amino-acid polypeptide reads, in one-letter code: Red pigment-concentrating hormone (93 aa).

The first 21 residues, Met-1–Ala-21, serve as a signal peptide directing secretion. Gln-22 carries the pyrrolidone carboxylic acid modification. Trp-29 is subject to Tryptophan amide. Residues Ala-33–Gly-93 constitute a propeptide that is removed on maturation. The disordered stretch occupies residues Ala-34–Leu-56.

Belongs to the AKH/HRTH/RPCH family. Strongly expressed in the eyestalk and weakly in brain. Not expressed in other tissues tested.

It localises to the secreted. Its function is as follows. This hormone adapts the animal to light backgrounds by stimulating concentration of the pigment of its red body-chromatophores. This chain is Red pigment-concentrating hormone, found in Penaeus monodon (Giant tiger prawn).